The primary structure comprises 217 residues: Small ribosomal subunit protein uS3 (217 aa).

The KH type-2 domain occupies 40-110 (IRDLINKGFN…EVYINIHEVR (71 aa)).

It belongs to the universal ribosomal protein uS3 family. In terms of assembly, part of the 30S ribosomal subunit. Forms a tight complex with proteins S10 and S14.

In terms of biological role, binds the lower part of the 30S subunit head. Binds mRNA in the 70S ribosome, positioning it for translation. In Rickettsia felis (strain ATCC VR-1525 / URRWXCal2) (Rickettsia azadi), this protein is Small ribosomal subunit protein uS3.